An 80-amino-acid chain; its full sequence is uncharacterized protein (80 aa).

The first 15 residues, 1–15 (MEVIVVIVVIVVVIA), serve as a signal peptide directing secretion. Positions 23–44 (NSNSNSNNSSDSSNESNNSDSS) are enriched in low complexity. The tract at residues 23 to 52 (NSNSNSNNSSDSSNESNNSDSSKNGGSDIY) is disordered. Residues asparagine 29, asparagine 30, asparagine 36, asparagine 39, and asparagine 64 are each glycosylated (N-linked (GlcNAc...) asparagine).

The protein resides in the secreted. This is an uncharacterized protein from Dictyostelium discoideum (Social amoeba).